Here is a 309-residue protein sequence, read N- to C-terminus: MPAKTKEPVALVITGPTASGKSALAHEVALRTGAEIISADSRQIYRELTIGSAKPTPEMLGEVPYHFINEKTIGEPYSSGAFATESRARIAMIRKRGNPVIVAGGSPLYLQGLIEGFSDLPPADPKIREKLQKELAEQGSRALYRKLQDLDPERAATLDHTKTHRLIRNLEIIELIGKSSKPPSPTPEMQFHAVALNFPREELYQRINLRVEEMMSEGLLQEAEALLKKYRPEISNRTLPALLTVGYQELFDHLERKTPLEGAVTLIQQHTRNYAKRQLTFLRNRMQLNWIQAPLTAQERTELAESLLS.

Residue G15 to S22 coordinates ATP. T17 to S22 provides a ligand contact to substrate. Residues D40 to Q43 are interaction with substrate tRNA.

It belongs to the IPP transferase family. As to quaternary structure, monomer. Requires Mg(2+) as cofactor.

It carries out the reaction adenosine(37) in tRNA + dimethylallyl diphosphate = N(6)-dimethylallyladenosine(37) in tRNA + diphosphate. Catalyzes the transfer of a dimethylallyl group onto the adenine at position 37 in tRNAs that read codons beginning with uridine, leading to the formation of N6-(dimethylallyl)adenosine (i(6)A). The sequence is that of tRNA dimethylallyltransferase from Chlorobium phaeovibrioides (strain DSM 265 / 1930) (Prosthecochloris vibrioformis (strain DSM 265)).